The sequence spans 272 residues: Shikimate dehydrogenase (NADP(+)) (272 aa).

Residues 14-16 (SKS) and threonine 61 contribute to the shikimate site. Lysine 65 (proton acceptor) is an active-site residue. Glutamate 77 provides a ligand contact to NADP(+). Positions 86 and 102 each coordinate shikimate. NADP(+)-binding positions include 126-130 (GAGGA), 149-154 (NRTVSR), and methionine 213. Residue tyrosine 215 participates in shikimate binding. Position 237 (glycine 237) interacts with NADP(+).

The protein belongs to the shikimate dehydrogenase family. Homodimer.

The catalysed reaction is shikimate + NADP(+) = 3-dehydroshikimate + NADPH + H(+). Its pathway is metabolic intermediate biosynthesis; chorismate biosynthesis; chorismate from D-erythrose 4-phosphate and phosphoenolpyruvate: step 4/7. In terms of biological role, involved in the biosynthesis of the chorismate, which leads to the biosynthesis of aromatic amino acids. Catalyzes the reversible NADPH linked reduction of 3-dehydroshikimate (DHSA) to yield shikimate (SA). The chain is Shikimate dehydrogenase (NADP(+)) from Escherichia coli O157:H7.